The chain runs to 310 residues: p-hydroxybenzoic acid efflux pump subunit AaeA (310 aa).

Residues 12–32 (AITVALVILAFIAISRAWVFY) form a helical membrane-spanning segment.

This sequence belongs to the membrane fusion protein (MFP) (TC 8.A.1) family.

It is found in the cell inner membrane. Forms an efflux pump with AaeB. The protein is p-hydroxybenzoic acid efflux pump subunit AaeA of Enterobacter sp. (strain 638).